The sequence spans 408 residues: Sprouty-related, EVH1 domain-containing protein 3 (408 aa).

Residues 1 to 113 (MVRVRAVVMA…KSLLAALAAL (113 aa)) enclose the WH1 domain. The segment at 118-226 (LTPSSSSSSS…YEDYRRSGPP (109 aa)) is disordered. The span at 120-130 (PSSSSSSSSPS) shows a compositional bias: low complexity. The KBD domain occupies 192-242 (LPFTGIPEPSESLAGAGSQGWGSRGYEDYRRSGPPPPPLALSTCVVRFAKT). Arg-238 carries the asymmetric dimethylarginine modification. Arg-246 is modified (omega-N-methylarginine). Residues 256-286 (LPAPLTEAAPPAPPARPPPGPGPTPAPAKAS) are disordered. Positions 265-281 (PPAPPARPPPGPGPTPA) are enriched in pro residues. The region spanning 294–405 (RCVHCRALFR…CAGCGGRHEE (112 aa)) is the SPR domain.

Interacts with palmitoyltransferase ZDHHC17/HIP14; the interaction leads to palmitoylation of SPRED3. In terms of processing, phosphorylated on tyrosine. Palmitoylated by ZDHHC17/HIP14. Post-translationally, ubiquitinated. In terms of tissue distribution, brain specific.

The protein resides in the cell membrane. Its function is as follows. Tyrosine kinase substrate that inhibits growth-factor-mediated activation of MAP kinase. Inhibits fibroblast growth factor (FGF)-induced retinal lens fiber differentiation, probably by inhibiting FGF-mediated phosphorylation of ERK1/2. Inhibits TGFB-induced epithelial-to-mesenchymal transition in lens epithelial cells. The protein is Sprouty-related, EVH1 domain-containing protein 3 (Spred3) of Mus musculus (Mouse).